A 348-amino-acid polypeptide reads, in one-letter code: MNLQGKKITVHDMTLRDGMHPKRHMMTLEQMKSIACGLDAAGVPLIEVTHGDGLGGSSVNYGFPAHSDEEYLGAVIPLMKQAKVSALLLPGIGTVDHLKMAKELGVHTIRVATHCTEADVSEQHIALARKLEMDTVGFLMMAHMNSPEGLVGQAKLMESYGANCVYITDSAGYMLPDDVRARLGAVREALKPETELGFHGHHNLAMGIANSIAAVECGATRIDAASAGLGAGAGNTPMEVLVAVCDRMGIQTGVDVWAIQDVAEDLVVPIMDFPIRIDRDSLTLGYAGVYGSFLLFAKRAERKYGVPAREILVELGRRGMVGGQEDMIEDTAITLAKARASKAQKVAA.

Residues 8–260 enclose the Pyruvate carboxyltransferase domain; sequence ITVHDMTLRD…QTGVDVWAIQ (253 aa). A substrate-binding site is contributed by 16–17; sequence RD. Aspartate 17 provides a ligand contact to Mn(2+). Histidine 20 (proton acceptor) is an active-site residue. The substrate site is built by serine 170 and histidine 199. Mn(2+) is bound by residues histidine 199 and histidine 201. Position 290 (tyrosine 290) interacts with substrate.

Belongs to the 4-hydroxy-2-oxovalerate aldolase family.

The enzyme catalyses (S)-4-hydroxy-2-oxopentanoate = acetaldehyde + pyruvate. The sequence is that of 4-hydroxy-2-oxovalerate aldolase 1 from Cupriavidus metallidurans (strain ATCC 43123 / DSM 2839 / NBRC 102507 / CH34) (Ralstonia metallidurans).